The primary structure comprises 400 residues: Diphosphomevalonate decarboxylase (400 aa).

(R)-5-diphosphomevalonate-binding positions include 25 to 28, Arg-80, 155 to 160, and Thr-211; these read YWGK and SGSACR.

The protein belongs to the diphosphomevalonate decarboxylase family. In terms of assembly, homodimer.

The protein localises to the cytoplasm. The enzyme catalyses (R)-5-diphosphomevalonate + ATP = isopentenyl diphosphate + ADP + phosphate + CO2. It functions in the pathway steroid biosynthesis; cholesterol biosynthesis. Its function is as follows. Catalyzes the ATP dependent decarboxylation of (R)-5-diphosphomevalonate to form isopentenyl diphosphate (IPP). Functions in the mevalonate (MVA) pathway leading to isopentenyl diphosphate (IPP), a key precursor for the biosynthesis of isoprenoids and sterol synthesis. The protein is Diphosphomevalonate decarboxylase (mvd) of Danio rerio (Zebrafish).